Consider the following 2439-residue polypeptide: Centrosomal protein of 290 kDa (2439 aa).

2 coiled-coil regions span residues 75-913 and 1271-1576; these read AEQA…VVTE and NTML…YMDT. Disordered regions lie at residues 1802–1824, 1867–1890, and 2017–2048; these read ETLN…EKEA, ELDR…KSSK, and ESRL…FQKE. Positions 2039–2048 are enriched in basic and acidic residues; sequence SQREHEFQKE. The stretch at 2046–2394 forms a coiled coil; it reads QKENLRLSTE…KLTQELKHFD (349 aa).

As to quaternary structure, part of the tectonic-like complex (also named B9 complex).

The protein localises to the cytoplasm. Its subcellular location is the cytoskeleton. It is found in the microtubule organizing center. It localises to the centrosome. The protein resides in the centriolar satellite. The protein localises to the nucleus. Its subcellular location is the cilium basal body. Involved in early and late steps in cilia formation. May play a role in early ciliogenesis in the disappearance of centriolar satellites and in the transition of primary ciliar vesicles (PCVs) to capped ciliary vesicles (CCVs). In the ciliary transition zone is part of the tectonic-like complex which is required for tissue-specific ciliogenesis and may regulate ciliary membrane composition. Involved in regulation of the BBSome complex integrity and in ciliary targeting of selected BBSome cargos. Required for the correct localization of ciliary and phototransduction proteins in retinal photoreceptor cells; may play a role in ciliary transport processes. Involved in development of the nervous system and kidney. In Danio rerio (Zebrafish), this protein is Centrosomal protein of 290 kDa (cep290).